A 452-amino-acid polypeptide reads, in one-letter code: Alkane uptake protein A (452 aa).

An N-terminal signal peptide occupies residues 1–36 (MSERSVYMVLSPRFSVRAVSLAVAAVSASLSMPTSA).

It belongs to the OmpP1/FadL family. In terms of assembly, interacts with the inner membrane protein AupB.

It localises to the cell outer membrane. Required for growth on alkanes. Probably involved in the uptake of micelle-solubilized alkanes. This is Alkane uptake protein A from Marinobacter nauticus (strain ATCC 49840 / DSM 8798 / CIP 103578 / SP17) (Marinobacter hydrocarbonoclasticus).